The chain runs to 455 residues: Chromosomal replication initiator protein DnaA (455 aa).

The domain I, interacts with DnaA modulators stretch occupies residues 1 to 73; the sequence is METSLETLWS…RDVVHEILGH (73 aa). The tract at residues 73-116 is domain II; sequence HPVEIQIEIAQGDSNATISAPEVASPPPTASPVENTNTSQRQQA. A disordered region spans residues 92-116; it reads APEVASPPPTASPVENTNTSQRQQA. Residues 104–116 show a composition bias toward polar residues; the sequence is PVENTNTSQRQQA. The tract at residues 117–333 is domain III, AAA+ region; it reads SLNPKYVFSR…GALIRAVAYI (217 aa). Positions 161, 163, 164, and 165 each coordinate ATP. Residues 334-455 are domain IV, binds dsDNA; it reads SISGLPMNVE…GDRIKLANQP (122 aa).

The protein belongs to the DnaA family. As to quaternary structure, oligomerizes as a right-handed, spiral filament on DNA at oriC.

The protein localises to the cytoplasm. Functionally, plays an essential role in the initiation and regulation of chromosomal replication. ATP-DnaA binds to the origin of replication (oriC) to initiate formation of the DNA replication initiation complex once per cell cycle. Binds the DnaA box (a 9 base pair repeat at the origin) and separates the double-stranded (ds)DNA. Forms a right-handed helical filament on oriC DNA; dsDNA binds to the exterior of the filament while single-stranded (ss)DNA is stabiized in the filament's interior. The ATP-DnaA-oriC complex binds and stabilizes one strand of the AT-rich DNA unwinding element (DUE), permitting loading of DNA polymerase. After initiation quickly degrades to an ADP-DnaA complex that is not apt for DNA replication. Binds acidic phospholipids. The chain is Chromosomal replication initiator protein DnaA from Acaryochloris marina (strain MBIC 11017).